The following is a 250-amino-acid chain: 5-oxoprolinase subunit A (250 aa).

It belongs to the LamB/PxpA family. In terms of assembly, forms a complex composed of PxpA, PxpB and PxpC.

The enzyme catalyses 5-oxo-L-proline + ATP + 2 H2O = L-glutamate + ADP + phosphate + H(+). Catalyzes the cleavage of 5-oxoproline to form L-glutamate coupled to the hydrolysis of ATP to ADP and inorganic phosphate. This is 5-oxoprolinase subunit A from Staphylococcus aureus (strain Mu3 / ATCC 700698).